The chain runs to 45 residues: Large ribosomal subunit protein bL34 (45 aa).

Belongs to the bacterial ribosomal protein bL34 family.

This chain is Large ribosomal subunit protein bL34, found in Streptomyces avermitilis (strain ATCC 31267 / DSM 46492 / JCM 5070 / NBRC 14893 / NCIMB 12804 / NRRL 8165 / MA-4680).